An 84-amino-acid polypeptide reads, in one-letter code: Large ribosomal subunit protein bL31B (84 aa).

The protein belongs to the bacterial ribosomal protein bL31 family. Type B subfamily. In terms of assembly, part of the 50S ribosomal subunit.

In Photorhabdus laumondii subsp. laumondii (strain DSM 15139 / CIP 105565 / TT01) (Photorhabdus luminescens subsp. laumondii), this protein is Large ribosomal subunit protein bL31B.